The following is a 351-amino-acid chain: Phenylalanine--tRNA ligase alpha subunit (351 aa).

A disordered region spans residues 45–69 (LGDDAPIPAARRSLGSLPKDQRKDA). Glu-269 provides a ligand contact to Mg(2+).

The protein belongs to the class-II aminoacyl-tRNA synthetase family. Phe-tRNA synthetase alpha subunit type 1 subfamily. As to quaternary structure, tetramer of two alpha and two beta subunits. Mg(2+) is required as a cofactor.

It is found in the cytoplasm. The catalysed reaction is tRNA(Phe) + L-phenylalanine + ATP = L-phenylalanyl-tRNA(Phe) + AMP + diphosphate + H(+). The protein is Phenylalanine--tRNA ligase alpha subunit of Corynebacterium jeikeium (strain K411).